The sequence spans 298 residues: Probable alpha-L-glutamate ligase (298 aa).

Residues 104–287 (MQLLSRHGIG…VAGKIIEFLE (184 aa)) form the ATP-grasp domain. ATP is bound by residues Lys141, 178 to 179 (EY), Asp187, and 211 to 213 (RSN). Residues Asp248, Glu260, and Asn262 each coordinate Mg(2+). Mn(2+) is bound by residues Asp248, Glu260, and Asn262.

It belongs to the RimK family. Mg(2+) serves as cofactor. Mn(2+) is required as a cofactor.

In Aeromonas salmonicida (strain A449), this protein is Probable alpha-L-glutamate ligase.